A 565-amino-acid chain; its full sequence is E3 ubiquitin-protein ligase ipaH7.8 (565 aa).

A disordered region spans residues 1–22 (MFSVNNTHSSVSCSPSINSNST). Residues 1-262 (MFSVNNTHSS…YHGPQIYFSM (262 aa)) are interaction with target proteins. A compositionally biased stretch (low complexity) spans 9–22 (SSVSCSPSINSNST). LRR repeat units follow at residues 58–79 (QEAVLNLSDLNLTSLPELPKHI), 80–97 (SALIVENNKLTSLPKLPA), 98–119 (FLKELNADNNRLSVIPELPESL), 120–137 (TTLSVRSNQLENLPVLPN), 138–157 (HLTSLFVENNRLYNLPALPE), 158–179 (KLKFLHVYYNRLTTLPDLPDKL), 180–199 (EILCAQRNNLVTFPQFSDRN), 202–223 (RQKEYYFHFNQITTLPESFSQL), and 225–248 (SSYRINISGNPLSTRVLQSLQRLT). The linker stretch occupies residues 263-270 (SDGQQNTL). The tract at residues 271-565 (HRPLADAVTA…SENGSRLHHS (295 aa)) is E3 ubiquitin-protein ligase catalytic domain. The region spanning 273-565 (PLADAVTAWF…SENGSRLHHS (293 aa)) is the NEL domain. The active-site Glycyl thioester intermediate is the Cys357.

The protein belongs to the LRR-containing bacterial E3 ligase family. In terms of processing, ubiquitinated in the presence of host E1 ubiquitin-activating enzyme, E2 ubiquitin-conjugating enzyme and ubiquitin.

Its subcellular location is the secreted. It localises to the host cytoplasm. It carries out the reaction S-ubiquitinyl-[E2 ubiquitin-conjugating enzyme]-L-cysteine + [acceptor protein]-L-lysine = [E2 ubiquitin-conjugating enzyme]-L-cysteine + N(6)-ubiquitinyl-[acceptor protein]-L-lysine.. Its pathway is protein modification; protein ubiquitination. In terms of biological role, E3 ubiquitin ligase effector protein that interferes with host's innate immunity. Functions to alter host cell physiology and promote bacterial survival in host tissues. Catalyzes ubiquitination of human gasdermins GSDMB and GSDMD, promoting their degradation by the proteasome, thereby preventing cell death. In contrast, activates host cell pyroptosis in mouse cells: catalyzes ubiquitination of mouse Nlrp1b allele 1 protein, releasing the cleaved C-terminal part of Nlrp1b, which polymerizes and forms the Nlrp1b inflammasome followed by host cell pyroptosis. Does not catalyze ubiquitination of mouse GSDMD. The chain is E3 ubiquitin-protein ligase ipaH7.8 from Shigella flexneri.